We begin with the raw amino-acid sequence, 112 residues long: Peptidyl-tRNA hydrolase (112 aa).

It belongs to the PTH2 family.

The protein resides in the cytoplasm. It catalyses the reaction an N-acyl-L-alpha-aminoacyl-tRNA + H2O = an N-acyl-L-amino acid + a tRNA + H(+). Its function is as follows. The natural substrate for this enzyme may be peptidyl-tRNAs which drop off the ribosome during protein synthesis. This is Peptidyl-tRNA hydrolase from Haloquadratum walsbyi (strain DSM 16790 / HBSQ001).